Consider the following 252-residue polypeptide: 5-oxoprolinase subunit A 1 (252 aa).

This sequence belongs to the LamB/PxpA family. As to quaternary structure, forms a complex composed of PxpA, PxpB and PxpC.

The enzyme catalyses 5-oxo-L-proline + ATP + 2 H2O = L-glutamate + ADP + phosphate + H(+). In terms of biological role, catalyzes the cleavage of 5-oxoproline to form L-glutamate coupled to the hydrolysis of ATP to ADP and inorganic phosphate. This chain is 5-oxoprolinase subunit A 1, found in Pseudomonas putida (strain ATCC 47054 / DSM 6125 / CFBP 8728 / NCIMB 11950 / KT2440).